Consider the following 334-residue polypeptide: MNERMVDQSMHSEETDFELSLRPTRLRQYIGQNSIKSNLEVFIKAAKLRHEPLDHVLLFGPPGLGKTTLSNIIANEMEVNIRTVSGPSLERPGDLAAILSGLQPGDVLFIDEIHRLSSVVEEVLYPAMEDFFLDIIIGKGDEARSIRIDLPPFTLVGATTRAGSLTGPLRDRFGVHLRLEYYNESDLKEIIIRTAEVLGTGIDEESAIELAKRSRGTPRVANRLLKRVRDFQQVNEDEQIYIETTKHALGLLQVDQHGLDYIDHKMMNCIIKQYNGGPVGLDTIAVTIGEERITIEDVYEPFLIQKGFLERTPRGRKATPLAYEHFAKSNEERG.

Residues 1–182 (MNERMVDQSM…FGVHLRLEYY (182 aa)) form a large ATPase domain (RuvB-L) region. Residues L21, R22, G63, K66, T67, T68, 129 to 131 (EDF), R172, Y182, and R219 contribute to the ATP site. Mg(2+) is bound at residue T67. The tract at residues 183–253 (NESDLKEIII…TTKHALGLLQ (71 aa)) is small ATPAse domain (RuvB-S). Residues 256–334 (QHGLDYIDHK…HFAKSNEERG (79 aa)) form a head domain (RuvB-H) region. DNA is bound by residues R292, R311, and R316.

The protein belongs to the RuvB family. As to quaternary structure, homohexamer. Forms an RuvA(8)-RuvB(12)-Holliday junction (HJ) complex. HJ DNA is sandwiched between 2 RuvA tetramers; dsDNA enters through RuvA and exits via RuvB. An RuvB hexamer assembles on each DNA strand where it exits the tetramer. Each RuvB hexamer is contacted by two RuvA subunits (via domain III) on 2 adjacent RuvB subunits; this complex drives branch migration. In the full resolvosome a probable DNA-RuvA(4)-RuvB(12)-RuvC(2) complex forms which resolves the HJ.

Its subcellular location is the cytoplasm. The catalysed reaction is ATP + H2O = ADP + phosphate + H(+). Functionally, the RuvA-RuvB-RuvC complex processes Holliday junction (HJ) DNA during genetic recombination and DNA repair, while the RuvA-RuvB complex plays an important role in the rescue of blocked DNA replication forks via replication fork reversal (RFR). RuvA specifically binds to HJ cruciform DNA, conferring on it an open structure. The RuvB hexamer acts as an ATP-dependent pump, pulling dsDNA into and through the RuvAB complex. RuvB forms 2 homohexamers on either side of HJ DNA bound by 1 or 2 RuvA tetramers; 4 subunits per hexamer contact DNA at a time. Coordinated motions by a converter formed by DNA-disengaged RuvB subunits stimulates ATP hydrolysis and nucleotide exchange. Immobilization of the converter enables RuvB to convert the ATP-contained energy into a lever motion, pulling 2 nucleotides of DNA out of the RuvA tetramer per ATP hydrolyzed, thus driving DNA branch migration. The RuvB motors rotate together with the DNA substrate, which together with the progressing nucleotide cycle form the mechanistic basis for DNA recombination by continuous HJ branch migration. Branch migration allows RuvC to scan DNA until it finds its consensus sequence, where it cleaves and resolves cruciform DNA. The chain is Holliday junction branch migration complex subunit RuvB from Staphylococcus aureus (strain N315).